We begin with the raw amino-acid sequence, 422 residues long: 5'-deoxyadenosine deaminase (422 aa).

Residues H57 and H59 each contribute to the Zn(2+) site. Residues E86 and H178 each coordinate substrate. Residue H205 coordinates Zn(2+). Residues E208 and D294 each coordinate substrate. D294 lines the Zn(2+) pocket.

It belongs to the metallo-dependent hydrolases superfamily. MTA/SAH deaminase family. In terms of assembly, homotetramer. Zn(2+) is required as a cofactor.

The enzyme catalyses 5'-deoxyadenosine + H2O + H(+) = 5'-deoxyinosine + NH4(+). It catalyses the reaction S-adenosyl-L-homocysteine + H2O + H(+) = S-inosyl-L-homocysteine + NH4(+). The catalysed reaction is S-methyl-5'-thioadenosine + H2O + H(+) = S-methyl-5'-thioinosine + NH4(+). It carries out the reaction adenosine + H2O + H(+) = inosine + NH4(+). Its pathway is amino-acid biosynthesis; S-adenosyl-L-methionine biosynthesis. In terms of biological role, catalyzes the deamination of three SAM-derived enzymatic products, namely 5'-deoxyadenosine, S-adenosyl-L-homocysteine, and 5'-methylthioadenosine, to produce the inosine analogs. Can also deaminate adenosine. The preferred substrate for this enzyme is 5'-deoxyadenosine, but all these substrates are efficiently deaminated. Likely functions in a S-adenosyl-L-methionine (SAM) recycling pathway from S-adenosyl-L-homocysteine (SAH) produced from SAM-dependent methylation reactions. May also be involved in the recycling of 5'-deoxyadenosine, whereupon the 5'-deoxyribose moiety of 5'-deoxyinosine is further metabolized to deoxyhexoses used for the biosynthesis of aromatic amino acids in methanogens. This is 5'-deoxyadenosine deaminase from Methanococcus maripaludis (strain C7 / ATCC BAA-1331).